We begin with the raw amino-acid sequence, 266 residues long: Type III pantothenate kinase (266 aa).

15 to 22 (EIGNSSTS) serves as a coordination point for ATP. Residues Tyr105 and 112–115 (GADR) each bind substrate. Asp114 (proton acceptor) is an active-site residue. Position 135 (Asp135) interacts with K(+). An ATP-binding site is contributed by Thr138. Thr191 is a binding site for substrate.

The protein belongs to the type III pantothenate kinase family. In terms of assembly, homodimer. The cofactor is NH4(+). K(+) serves as cofactor.

Its subcellular location is the cytoplasm. It carries out the reaction (R)-pantothenate + ATP = (R)-4'-phosphopantothenate + ADP + H(+). It participates in cofactor biosynthesis; coenzyme A biosynthesis; CoA from (R)-pantothenate: step 1/5. Functionally, catalyzes the phosphorylation of pantothenate (Pan), the first step in CoA biosynthesis. In Chlorobium chlorochromatii (strain CaD3), this protein is Type III pantothenate kinase.